Here is a 193-residue protein sequence, read N- to C-terminus: MLLDAQRFFNRSFSINVICELKHNVNTRRKFEIKDWPTIMLVSRNDKPKISSEEVTHFIDDYKKRRKTQMTRFFGITIFTLITCRIAMKKMITAKVPLNTFQANYASRTQTITHTQKSLAGSLLAATGMTLGIFGMGITGTCWSWDVSSFQELKQRLERRANNEFVVTNMPLDKRSQQVVDSLVKTHNSSLCK.

The chain crosses the membrane as a helical span at residues 119–143 (LAGSLLAATGMTLGIFGMGITGTCW).

The protein resides in the mitochondrion membrane. This is an uncharacterized protein from Saccharomyces cerevisiae (strain ATCC 204508 / S288c) (Baker's yeast).